The following is a 186-amino-acid chain: ATP synthase subunit delta (186 aa).

It belongs to the ATPase delta chain family. F-type ATPases have 2 components, F(1) - the catalytic core - and F(0) - the membrane proton channel. F(1) has five subunits: alpha(3), beta(3), gamma(1), delta(1), epsilon(1). F(0) has three main subunits: a(1), b(2) and c(10-14). The alpha and beta chains form an alternating ring which encloses part of the gamma chain. F(1) is attached to F(0) by a central stalk formed by the gamma and epsilon chains, while a peripheral stalk is formed by the delta and b chains.

Its subcellular location is the cell inner membrane. F(1)F(0) ATP synthase produces ATP from ADP in the presence of a proton or sodium gradient. F-type ATPases consist of two structural domains, F(1) containing the extramembraneous catalytic core and F(0) containing the membrane proton channel, linked together by a central stalk and a peripheral stalk. During catalysis, ATP synthesis in the catalytic domain of F(1) is coupled via a rotary mechanism of the central stalk subunits to proton translocation. Functionally, this protein is part of the stalk that links CF(0) to CF(1). It either transmits conformational changes from CF(0) to CF(1) or is implicated in proton conduction. The chain is ATP synthase subunit delta from Brucella abortus (strain S19).